The chain runs to 231 residues: uncharacterized protein (231 aa).

Position 10 to 34 (10 to 34 (VVTGAGSGIGEAIATLLHEEGAKVV)) interacts with NADP(+). S140 provides a ligand contact to substrate. Residue Y153 is the Proton acceptor of the active site.

It belongs to the short-chain dehydrogenases/reductases (SDR) family.

This is an uncharacterized protein from Staphylococcus aureus (strain COL).